The following is a 153-amino-acid chain: Deoxyuridine 5'-triphosphate nucleotidohydrolase (153 aa).

Substrate contacts are provided by residues 71–73 (RSG), asparagine 84, 88–90 (LID), and methionine 98.

It belongs to the dUTPase family. It depends on Mg(2+) as a cofactor.

The enzyme catalyses dUTP + H2O = dUMP + diphosphate + H(+). The protein operates within pyrimidine metabolism; dUMP biosynthesis; dUMP from dCTP (dUTP route): step 2/2. Its function is as follows. This enzyme is involved in nucleotide metabolism: it produces dUMP, the immediate precursor of thymidine nucleotides and it decreases the intracellular concentration of dUTP so that uracil cannot be incorporated into DNA. This Hydrogenovibrio crunogenus (strain DSM 25203 / XCL-2) (Thiomicrospira crunogena) protein is Deoxyuridine 5'-triphosphate nucleotidohydrolase.